The following is a 144-amino-acid chain: Large ribosomal subunit protein uL13 (144 aa).

Belongs to the universal ribosomal protein uL13 family. As to quaternary structure, part of the 50S ribosomal subunit.

Its function is as follows. This protein is one of the early assembly proteins of the 50S ribosomal subunit, although it is not seen to bind rRNA by itself. It is important during the early stages of 50S assembly. The sequence is that of Large ribosomal subunit protein uL13 from Lachnoclostridium phytofermentans (strain ATCC 700394 / DSM 18823 / ISDg) (Clostridium phytofermentans).